Here is a 327-residue protein sequence, read N- to C-terminus: Petrobactin synthase (327 aa).

It catalyses the reaction N(8)-citryl-spermidine + 3,4-dihydroxybenzoyl-[aryl-carrier protein] = N(1)-(3,4-dihydroxybenzoyl)-N(8)-citryl-spermidine + holo-[aryl-carrier protein] + H(+). The enzyme catalyses N(8),N'(8)-citryl-bis(spermidine) + 3,4-dihydroxybenzoyl-[aryl-carrier protein] = N(1)-(3,4-dihydroxybenzoyl)-N(8),N'(8)-citryl-bis(spermidine) + holo-[aryl-carrier protein] + H(+). It carries out the reaction N(1)-(3,4-dihydroxybenzoyl)-N(8),N'(8)-citryl-bis(spermidine) + 3,4-dihydroxybenzoyl-[aryl-carrier protein] = petrobactin + holo-[aryl-carrier protein] + H(+). It participates in siderophore biosynthesis; petrobactin biosynthesis. Functionally, involved in the biosynthesis of petrobactin, a catecholate siderophore that functions in both iron acquisition and virulence. Transfers the activated 3,4-dihydroxybenzoate (3,4-DHBA) moiety from 3,4-DHBA-loaded AsbD to different receipient molecules, including N-citryl-spermidine, N8,N'8-citryl-bis(spermidine) and N1-(3,4-dihydroxybenzoyl)-N8,N'8-citryl-bis(spermidine). Also catalyzes the transfer of the activated 3,4-DHBA moiety from 3,4-DHBA-loaded AsbD to spermidine to generate DHB-spermidine (DHB-SP). The protein is Petrobactin synthase of Bacillus anthracis.